The sequence spans 109 residues: MKLSIIIIATSLVIAVVAFPSKDSKAIENDKTEQRMEIVVQETARACSKQIGDKCKRNCECCGKTVVCGTIYVGGKEVNQCMDKTSDNAILNGLGKGMNFIENTFSFCV.

An N-terminal signal peptide occupies residues Met1–Ala18. The propeptide occupies Phe19 to Ala46. Cystine bridges form between Cys47/Cys62, Cys55/Cys68, Cys59/Cys108, and Cys61/Cys81.

It belongs to the neurotoxin 25 family. F7 subfamily. Expressed by the venom gland.

The protein resides in the secreted. In terms of biological role, putative ion channel inhibitor. The polypeptide is Hainantoxin-XVIII (Cyriopagopus hainanus (Chinese bird spider)).